A 322-amino-acid polypeptide reads, in one-letter code: Malate dehydrogenase (322 aa).

Residues 10–15 (GSGQIG) and D34 contribute to the NAD(+) site. 2 residues coordinate substrate: R83 and R89. NAD(+) contacts are provided by residues N96 and 119-121 (ITN). Substrate-binding residues include N121 and R152. H176 functions as the Proton acceptor in the catalytic mechanism.

Belongs to the LDH/MDH superfamily. MDH type 3 family.

It catalyses the reaction (S)-malate + NAD(+) = oxaloacetate + NADH + H(+). Its function is as follows. Catalyzes the reversible oxidation of malate to oxaloacetate. This is Malate dehydrogenase from Bradyrhizobium diazoefficiens (strain JCM 10833 / BCRC 13528 / IAM 13628 / NBRC 14792 / USDA 110).